Consider the following 248-residue polypeptide: Triosephosphate isomerase (248 aa).

Substrate is bound at residue K12. H94 (electrophile) is an active-site residue. E165 functions as the Proton acceptor in the catalytic mechanism.

The protein belongs to the triosephosphate isomerase family. Homodimer.

It catalyses the reaction D-glyceraldehyde 3-phosphate = dihydroxyacetone phosphate. Its pathway is carbohydrate biosynthesis; gluconeogenesis. It participates in carbohydrate degradation; glycolysis; D-glyceraldehyde 3-phosphate from glycerone phosphate: step 1/1. This chain is Triosephosphate isomerase (Tpi), found in Bombyx mori (Silk moth).